A 621-amino-acid chain; its full sequence is Chaperone protein HscA homolog (621 aa).

Belongs to the heat shock protein 70 family.

Its function is as follows. Chaperone involved in the maturation of iron-sulfur cluster-containing proteins. Has a low intrinsic ATPase activity which is markedly stimulated by HscB. This Ralstonia nicotianae (strain ATCC BAA-1114 / GMI1000) (Ralstonia solanacearum) protein is Chaperone protein HscA homolog.